The chain runs to 259 residues: Proteasome subunit alpha (259 aa).

The protein belongs to the peptidase T1A family. The 20S proteasome core is composed of 14 alpha and 14 beta subunits that assemble into four stacked heptameric rings, resulting in a barrel-shaped structure. The two inner rings, each composed of seven catalytic beta subunits, are sandwiched by two outer rings, each composed of seven alpha subunits. The catalytic chamber with the active sites is on the inside of the barrel. Has a gated structure, the ends of the cylinder being occluded by the N-termini of the alpha-subunits. Is capped at one or both ends by the proteasome regulatory ATPase, PAN.

It localises to the cytoplasm. With respect to regulation, the formation of the proteasomal ATPase PAN-20S proteasome complex, via the docking of the C-termini of PAN into the intersubunit pockets in the alpha-rings, triggers opening of the gate for substrate entry. Interconversion between the open-gate and close-gate conformations leads to a dynamic regulation of the 20S proteasome proteolysis activity. Its function is as follows. Component of the proteasome core, a large protease complex with broad specificity involved in protein degradation. The chain is Proteasome subunit alpha from Methanococcus maripaludis (strain C7 / ATCC BAA-1331).